A 613-amino-acid polypeptide reads, in one-letter code: Phosphoinositide phospholipase C 6 (613 aa).

The PI-PLC X-box domain maps to 137-281 (QDMTAPLSHY…LLHRIIISTK (145 aa)). Catalysis depends on residues His152 and His198. Residues 288 to 349 (ESRNPIVKQK…ASEDQKPAYK (62 aa)) form a disordered region. Residues 349 to 465 (KRLITIHAGK…GYVKKPNFLM (117 aa)) enclose the PI-PLC Y-box domain. The C2 domain maps to 466 to 595 (KKGFHDEVFD…PGIRSVPLYD (130 aa)).

Ca(2+) is required as a cofactor. In terms of tissue distribution, expressed in leaves, flowers and siliques, but not in roots.

It localises to the cell membrane. It carries out the reaction a 1,2-diacyl-sn-glycero-3-phospho-(1D-myo-inositol-4,5-bisphosphate) + H2O = 1D-myo-inositol 1,4,5-trisphosphate + a 1,2-diacyl-sn-glycerol + H(+). The production of the second messenger molecules diacylglycerol (DAG) and inositol 1,4,5-trisphosphate (IP3) is mediated by activated phosphatidylinositol-specific phospholipase C enzymes. This chain is Phosphoinositide phospholipase C 6 (PLC6), found in Arabidopsis thaliana (Mouse-ear cress).